Reading from the N-terminus, the 142-residue chain is Hemoglobin subunit alpha (142 aa).

Residues 2–142 form the Globin domain; sequence VLSADDKANI…VSTVLTSKYR (141 aa). Serine 4 bears the Phosphoserine mark. N6-succinyllysine is present on residues lysine 8 and lysine 12. Lysine 17 bears the N6-acetyllysine; alternate mark. Lysine 17 is subject to N6-succinyllysine; alternate. Position 25 is a phosphotyrosine (tyrosine 25). Serine 36 carries the post-translational modification Phosphoserine. N6-succinyllysine is present on lysine 41. Serine 50 carries the phosphoserine modification. Histidine 59 provides a ligand contact to O2. Histidine 88 contacts heme b. Phosphothreonine is present on threonine 109. Serine 125 and serine 132 each carry phosphoserine. 2 positions are modified to phosphothreonine: threonine 135 and threonine 138. Serine 139 is modified (phosphoserine).

It belongs to the globin family. In terms of assembly, heterotetramer of two alpha chains and two beta chains. Red blood cells.

Functionally, involved in oxygen transport from the lung to the various peripheral tissues. In terms of biological role, hemopressin acts as an antagonist peptide of the cannabinoid receptor CNR1. Hemopressin-binding efficiently blocks cannabinoid receptor CNR1 and subsequent signaling. The sequence is that of Hemoglobin subunit alpha (HBA) from Cricetomys gambianus (Northern giant pouched rat).